The sequence spans 667 residues: tRNA 5-methylaminomethyl-2-thiouridine biosynthesis bifunctional protein MnmC (667 aa).

The tract at residues Met1–Asn215 is tRNA (mnm(5)s(2)U34)-methyltransferase. An FAD-dependent cmnm(5)s(2)U34 oxidoreductase region spans residues Ile240–Lys667.

The protein in the N-terminal section; belongs to the methyltransferase superfamily. tRNA (mnm(5)s(2)U34)-methyltransferase family. In the C-terminal section; belongs to the DAO family. Requires FAD as cofactor.

It is found in the cytoplasm. The catalysed reaction is 5-aminomethyl-2-thiouridine(34) in tRNA + S-adenosyl-L-methionine = 5-methylaminomethyl-2-thiouridine(34) in tRNA + S-adenosyl-L-homocysteine + H(+). In terms of biological role, catalyzes the last two steps in the biosynthesis of 5-methylaminomethyl-2-thiouridine (mnm(5)s(2)U) at the wobble position (U34) in tRNA. Catalyzes the FAD-dependent demodification of cmnm(5)s(2)U34 to nm(5)s(2)U34, followed by the transfer of a methyl group from S-adenosyl-L-methionine to nm(5)s(2)U34, to form mnm(5)s(2)U34. This Campylobacter hominis (strain ATCC BAA-381 / DSM 21671 / CCUG 45161 / LMG 19568 / NCTC 13146 / CH001A) protein is tRNA 5-methylaminomethyl-2-thiouridine biosynthesis bifunctional protein MnmC.